Here is a 573-residue protein sequence, read N- to C-terminus: MLNYFNTALLMVQMILKKQDPSIKFGQMSVNDQGFYLDYLSQTLNINPEDFNKLIKSLAKLCSSAQPISLKTVDLKIANQLLSDQPYLLELINEAKEKTVNLATVDNHHYYLPMAQLVDNTKLVKAFNFQSVGGAYFKGDKDNLVMVRLNGFGFENDKVMQDYLEIIEEQKQRDHRRINKILELFTFNQLAGPGMPIWLPNGQIVRQLIGDYVHSVQKKFGFMAVNTPILGNVDLYKKSGHYNHYAKDMFPELALLDGDKMMLRPMTCPHHCLVYLNKPRNYYDLPMRLSEDALLHRYEASGGLTGLERVRAMTLLDNHIFCRLDQIKTEILNAYQVIKEVIGTFNLKFHRIDLSLHDPNDKQSFIDNEQMWARSENQLEDALKDLGLEYTKQVGEAAFYGPKIDFQVKTALNKIITVSTIQLDFSLPSEEKFDIKYKTKDNTYEQGVIIHLGIIGTYERFVATLLEQTKGALDLWLAPKQAVIIPVNNSVHLEGCNQLLEKLLARDLRVTVDSRDERLNKKIRDHQVNKIPVQIIIGDNELKNPDLITYRLYGQEDSNQLELTKFIELFKKP.

The interval 174–474 (DHRRINKILE…LLEQTKGALD (301 aa)) is catalytic. Zn(2+) contacts are provided by cysteine 268, histidine 319, and histidine 451.

This sequence belongs to the class-II aminoacyl-tRNA synthetase family. In terms of assembly, homodimer. Zn(2+) serves as cofactor.

Its subcellular location is the cytoplasm. It carries out the reaction tRNA(Thr) + L-threonine + ATP = L-threonyl-tRNA(Thr) + AMP + diphosphate + H(+). In terms of biological role, catalyzes the attachment of threonine to tRNA(Thr) in a two-step reaction: L-threonine is first activated by ATP to form Thr-AMP and then transferred to the acceptor end of tRNA(Thr). Also edits incorrectly charged L-seryl-tRNA(Thr). In Mycoplasmoides gallisepticum (strain R(low / passage 15 / clone 2)) (Mycoplasma gallisepticum), this protein is Threonine--tRNA ligase.